The sequence spans 388 residues: Na(+)/H(+) antiporter NhaA (388 aa).

The Cytoplasmic portion of the chain corresponds to 1–11 (MKHLHRFFSSD). A helical transmembrane segment spans residues 12-31 (ASGGIILIIAAILAMMMANS). The Periplasmic portion of the chain corresponds to 32-58 (GATSGWYHDFLETPVQLRVGSLEINKN). A helical transmembrane segment spans residues 59–80 (MLLWINDALMAVFFLLVGLEVK). Residues 81–96 (RELMQGSLASLRQAAF) are Cytoplasmic-facing. Residues 97 to 116 (PVIAAIGGMIVPALLYLAFN) form a helical membrane-spanning segment. Residues 117-122 (YADPIT) are Periplasmic-facing. The helical transmembrane segment at 123–130 (REGWAIPA) threads the bilayer. Residues 131-154 (ATDIAFALGVLALLGSRVPLALKI) are Cytoplasmic-facing. A helical transmembrane segment spans residues 155-176 (FLMALAIIDDLGAIIIIALFYT). The Periplasmic segment spans residues 177–180 (NDLS). A helical transmembrane segment spans residues 181-200 (MASLGVAAVAIAVLAVLNLC). Topologically, residues 201–204 (GVRR) are cytoplasmic. A helical membrane pass occupies residues 205–222 (TGVYILVGVVLWTAVLKS). A topological domain (periplasmic) is located at residue Gly223. The chain crosses the membrane as a helical span at residues 224-236 (VHATLAGVIVGFF). The Cytoplasmic segment spans residues 237–253 (IPLKEKHGRSPAKRLEH). A helical transmembrane segment spans residues 254 to 272 (VLHPWVAYLILPLFAFANA). Topologically, residues 273–286 (GVSLQGVTLDGLTS) are periplasmic. The chain crosses the membrane as a helical span at residues 287–310 (ILPLGIIAGLLIGKPLGISLFCWL). Over 311–339 (ALRLKLAHLPEGTTYQQIMAVGILCGIGF) the chain is Cytoplasmic. The helical transmembrane segment at 340 to 350 (TMSIFIASLAF) threads the bilayer. Topologically, residues 351–357 (GSVDPEL) are periplasmic. A helical membrane pass occupies residues 358 to 380 (INWAKLGILVGSISSAVIGYSWL). Over 381 to 388 (RVRLRPSV) the chain is Cytoplasmic.

The protein belongs to the NhaA Na(+)/H(+) (TC 2.A.33) antiporter family.

The protein localises to the cell inner membrane. The catalysed reaction is Na(+)(in) + 2 H(+)(out) = Na(+)(out) + 2 H(+)(in). Functionally, na(+)/H(+) antiporter that extrudes sodium in exchange for external protons. This chain is Na(+)/H(+) antiporter NhaA, found in Shigella boydii serotype 4 (strain Sb227).